Reading from the N-terminus, the 1625-residue chain is MPLSGWPKGGYEVRLWYVHVPERYFIYMAADWNPRHAPINIGYPSRTTMNPSSQLLVQQLAAVLEVDTAELDLNSGFVHNGGNSLSAVEFVSRSKSLGVSLSIASILSSTNLRALFTDLLSSESNLIPIPDPSDDSDDLSNPSSSTGGSPRVATPISSNVSTAAEDDYLTQGSVLTQYATQSLSEMQASLLHGSLKSPGTNIIYHYETYQTDVIPVLKRAWKTVIEGEPIFHSSLLDGSARNQEYFTWSEVTVETEAEYREQLQTLWLKSVSSSFKVVHWKRSPPASSQSTVIWAVHHALVDGYSAMLLFCKVRRAIKGLPIVPGPSFSDVEKRIRVWRQEHKSQGDEYWAGHAAQLDQAQGELLLPAPTPEGTSSAITESEEVYVAPSVSNTQLHCVAKRLGVTLSTCYYAAWSLVLSLYADSASVVFGAVLAGRNLPLEGVDEVVGPLVNTLPLCLTLSRQQSAQDFLKNLFSRMVELAEYQWTTPDNGYTRNFSSAMAMQVPGPECKDGVSPIEPPYTRQTTDVPLSINILTDGAARFVYHTSQYSRADIVRLGKYFQRALQLLLRPHRPIEECLQGLLGCVDLQTLMGFGNCSSSLTTTVAIKEDLVTLFESAVSRNPMDVAVQKGNCHLTYQELDTHAGRVAATLRGYIQDGDVVCLHADRSVNWIVGIMGILKAGGVYCALDKALPQEARETIFSASGSRLFLVPSLSDQSFCPTDCDRLLVVEDLVKDDNVPITHRDSPRPQTDAYLCFTSGSTGKPKGVMCLHQGLVAFQRDLEVRLFAQPGRRVAQIMSVAFDGSIHEIFSALSYGAALVLQSGDDPFAHLSDVDSAILTPSMARVLNPADFERLSTVSTKVYLVGEPVTQDVCDRWSEQKTLYNMYGPTEGTCGATIKQLHPRQRVTIGPPNPSTRIYIMNQHQELVPPGVIGEIYIAGVQVARHYIGMPEQTAQRFVADPIIRIGERMYKTGDRGYWSEDGEVVCLGRTDRQIKLRGFRLDLDDLETRMIRAFPAVTAVALTRQGNHLIAAILPASTDVDAFSARVAQVLPPYATPRKILALDEFPTTKAGKRDYLAIAKLSAQAPVSTGRTLTSPMEKLVGDAFRDILQLGKDVALHTHSSFRELGGHSLLQLLLATRISQGVNRQVPLYVVAQHDRIDHLAAAIDSGLGLQQLVTTDPMGLGESAIAPIEREWWHKYQINESTSSFNVNFMAKIDDCLVDRARLVHACNEVMARHRVLRSRYIFSRAAGRVVRQYSPLAPRVQAVKTVNPWVEVNRPFSLSRSAPIRAVVSDSYFILTISHIVADLTTLQILLREISSHYQGGSLPSIPHTYMNSTLWYEKPTSCDLDFWSDCLGQLPDTTHLLGHGGYRRGYRGRSALCEVPPTTYQSMRHFLRQSSITAQQLSLATIALCLDDPSVPMPTETDIVLGIPYINRKSQEDLDVVGLFLEPLPVRISFGQETHNHEKASYLDTVQRSVRSSVGHAVHWDQLLEHLQVSTTPPDHPLFDVVVTFHSQSHSNGLELSAPGLRTCYTYAEGAKFRLLCEFSALSEDRLLLRLEYDTDCFTEENIQLLQARIPLALSLLVQNVPYDMIRQTLACPPETQPVKVLKPDVVFGTPLSDI.

A Carrier 1 domain is found at 47-123 (TTMNPSSQLL…ALFTDLLSSE (77 aa)). Residue Ser84 is modified to O-(pantetheine 4'-phosphoryl)serine. The segment at 127-157 (IPIPDPSDDSDDLSNPSSSTGGSPRVATPIS) is disordered. The segment at 286-567 (ASSQSTVIWA…KYFQRALQLL (282 aa)) is condensation 1. The adenylation stretch occupies residues 614–997 (FESAVSRNPM…GRTDRQIKLR (384 aa)). Residues 1096-1171 (SPMEKLVGDA…HLAAAIDSGL (76 aa)) form the Carrier 2 domain. Ser1131 carries the post-translational modification O-(pantetheine 4'-phosphoryl)serine. A condensation 2 region spans residues 1195-1585 (EWWHKYQINE…LQARIPLALS (391 aa)).

The protein belongs to the NRP synthetase family.

It participates in mycotoxin biosynthesis. In terms of biological role, nonribosomal peptide synthetase; part of the gene cluster that mediates the biosynthesis of aspirochlorine (or antibiotic A30641), an unusual halogenated spiro compound with distinctive antifungal properties due to selective inhibition of protein biosynthesis, and which is also active against bacteria, viruses, and murine tumor cells. The non-ribosomal peptide synthetase (NRPS) aclP is responsible the formation of the diketopiperazine (DKP) core from the condensation of 2 phenylalanine residues. One Phe residue is tailored into chlorotyrosine by hydroxylation and chlorination, whereas the second Phe undergoes an unprecedented C-C bond cleavage to be converted into glycine. After formation of the DKP, sulfur is incorporated into the DKP by conjugation with glutathione by aclG, followed by its stepwise degradation to the thiol by aclI, aclJ and aclK, and the dithiol oxidation by aclT. In addition, oxygenases (aclB, aclC, aclL and aclO) and O-methyltransferases (aclM and aclU) act as tailoring enzymes to produce the intermediate dechloroaspirochlorine. Ultimately, chlorination of dechloroaspirochlorine by the halogenase aclH is the last step in the aspirochlorine pathway. This is Nonribosomal peptide synthetase aclP from Aspergillus oryzae (strain ATCC 42149 / RIB 40) (Yellow koji mold).